The sequence spans 375 residues: POU domain, class 3, transcription factor 1-B (375 aa).

Disordered stretches follow at residues 1–29, 56–139, and 151–200; these read MAAT…RMHQ, MSLT…QPLI, and MLGP…PSSD. Polar residues-rich tracts occupy residues 107-117, 129-139, and 151-160; these read VHQQTPSSHAW, SPGSNSHQPLI, and MLGPQASSLH. The segment covering 162 to 178 has biased composition (basic and acidic residues); the sequence is SMRDPLHDDPGVHDTHV. The POU-specific domain maps to 194-268; it reads EDAPSSDDLE…LLNKWLEETD (75 aa). Residues 286 to 345 constitute a DNA-binding region (homeobox); it reads KRKKRTSIEVGVKGALENHFLKCPKPSAHEITSLADSLQLEKEVVRVWFCNRRQKEKRMT.

The protein belongs to the POU transcription factor family. Class-3 subfamily.

Its subcellular location is the nucleus. Acts as a transcription factor. May play a role in neuronal differentiation. The sequence is that of POU domain, class 3, transcription factor 1-B (pou3f1-b) from Xenopus laevis (African clawed frog).